The chain runs to 265 residues: Mlc titration factor A (265 aa).

Residues H111, H148, H152, and E211 each coordinate Zn(2+).

Belongs to the MtfA family. In terms of assembly, interacts with Mlc. Requires Zn(2+) as cofactor.

The protein localises to the cytoplasm. In terms of biological role, involved in the modulation of the activity of the glucose-phosphotransferase system (glucose-PTS). Interacts with the transcriptional repressor Mlc, preventing its interaction with DNA and leading to the modulation of expression of genes regulated by Mlc, including ptsG, which encodes the PTS system glucose-specific EIICB component. Shows zinc-dependent metallopeptidase activity. This is Mlc titration factor A from Salmonella schwarzengrund (strain CVM19633).